The chain runs to 612 residues: ETS-related transcription factor Elf-1 (612 aa).

4 positions are modified to phosphoserine: serine 110, serine 163, serine 167, and serine 168. Residues 156-169 (VQETNADSPGASSP) show a composition bias toward polar residues. The tract at residues 156-199 (VQETNADSPGASSPEQRKRKKGRKTKPPRPDSPTTTPNISVKKK) is disordered. Residues 172 to 182 (RKRKKGRKTKP) show a composition bias toward basic residues. Serine 187 is modified (phosphoserine). Threonine 190 is modified (phosphothreonine). The ETS DNA-binding region spans 208–290 (IYLWEFLLAL…EGQRLVYQFK (83 aa)). A disordered region spans residues 300 to 361 (DDEDPSSSIE…AANPKDPVEV (62 aa)). A compositionally biased stretch (low complexity) spans 305–322 (SSSIESSDQSLSSTTASS). Positions 323-335 (RNQANRSRVSSSP) are enriched in polar residues. Phosphoserine is present on serine 431. Over residues 562-577 (EVEKKAEDDLNEDAEK) the composition is skewed to basic and acidic residues. Residues 562 to 586 (EVEKKAEDDLNEDAEKSAQQPQPYV) are disordered.

This sequence belongs to the ETS family. In terms of assembly, binds to the underphosphorylated form of RB. May interact with other transcription factors in order to regulate specific genes. Interacts with RUNX1. Interacts with SP1; the interaction is inhibited by glycosylation of SP1. As to expression, predominantly found in hematopoietic cells. Detected in other cell types such as fibroblasts.

It is found in the nucleus. Transcription factor that activates the LYN and BLK promoters. The polypeptide is ETS-related transcription factor Elf-1 (Elf1) (Mus musculus (Mouse)).